Here is a 60-residue protein sequence, read N- to C-terminus: Large ribosomal subunit protein bL32 (60 aa).

It belongs to the bacterial ribosomal protein bL32 family.

The chain is Large ribosomal subunit protein bL32 (rpmF) from Borreliella burgdorferi (strain ATCC 35210 / DSM 4680 / CIP 102532 / B31) (Borrelia burgdorferi).